Reading from the N-terminus, the 188-residue chain is Ribosome maturation factor RimP (188 aa).

Belongs to the RimP family.

It localises to the cytoplasm. Its function is as follows. Required for maturation of 30S ribosomal subunits. The polypeptide is Ribosome maturation factor RimP (Erythrobacter litoralis (strain HTCC2594)).